Consider the following 175-residue polypeptide: Ribulose bisphosphate carboxylase small subunit, chloroplastic (175 aa).

A chloroplast-targeting transit peptide spans 1-46; that stretch reads MAPSVMASSATTVAPFQGLKSTAGMPVARRSGNSSFGNVSNGGRIR. The tract at residues 60-64 is interaction with large subunit; the sequence is ETLSY.

This sequence belongs to the RuBisCO small chain family. Heterohexadecamer of 8 large and 8 small subunits.

It is found in the plastid. It localises to the chloroplast. Functionally, ruBisCO catalyzes two reactions: the carboxylation of D-ribulose 1,5-bisphosphate, the primary event in carbon dioxide fixation, as well as the oxidative fragmentation of the pentose substrate. Both reactions occur simultaneously and in competition at the same active site. Although the small subunit is not catalytic it is essential for maximal activity. In Oryza sativa subsp. indica (Rice), this protein is Ribulose bisphosphate carboxylase small subunit, chloroplastic.